The following is a 772-amino-acid chain: Calcium-binding mitochondrial carrier protein (772 aa).

Residues 1–377 are N-terminal domain; the sequence is MFANRVRQAQ…SISDFEKSTG (377 aa). EF-hand domains are found at residues 132–165, 166–201, 235–270, and 347–382; these read LDADKFKVLFQMADVDHTGYISFDEYVMFDELMA, KPEAEYFLAFKLFDRDGNGYISKNDFKHVITASLDP, LQQERIKQEFKFHDKYNSGYIPRDKFAKVLGSVKLR, and ITPLEIDLIFHLFDLNKDGKLSISDFEKSTGLNINK. Asp-145, Asp-147, Thr-149, Tyr-151, Glu-156, Asp-179, Asp-181, Asn-183, Tyr-185, and Asp-190 together coordinate Ca(2+). Asp-360, Asn-362, Asp-364, Lys-366, and Asp-371 together coordinate Ca(2+). A linker loop domain region spans residues 378–422; sequence LNINKIGGGTNYSDSYPSDSHVTIQNSSTTPSPSTPITNTAAAIA. Positions 432 to 720 are carrier domain; that stretch reads AQQVLESIEN…KALLPDAEYK (289 aa). 3 Solcar repeats span residues 436–526, 535–616, and 624–712; these read LESI…LRDL, IYFP…MKTI, and LGPM…LQKA. Transmembrane regions (helical) follow at residues 442-459, 501-520, 545-558, 591-610, 630-647, and 687-706; these read FALGSIAGGIGAAAVYPI, GILPQMVGVAPEKAIKLTVN, GFAGMSQVCVTNPL, GAGACLLRDIPFSAIYFPTY, LLAGAVAGIPAASLVTPA, and GALARVFRSSPQFGVTLVSY. The interval 721–772 is C-terminal domain; that stretch reads PPTNAPITQKDFDVIRGNTNTVQRVIDMESKFGTLHQTRDNNKSSNGGENKN. A disordered region spans residues 751-772; it reads KFGTLHQTRDNNKSSNGGENKN. The segment covering 763-772 has biased composition (low complexity); that stretch reads KSSNGGENKN.

The protein belongs to the mitochondrial carrier (TC 2.A.29) family. Homodimer (via N-terminus).

It is found in the mitochondrion inner membrane. In terms of biological role, mitochondrial and calcium-binding carrier that catalyzes the calcium-dependent exchange of cytoplasmic glutamate with mitochondrial aspartate across the mitochondrial inner membrane. This Dictyostelium discoideum (Social amoeba) protein is Calcium-binding mitochondrial carrier protein (mcfO).